A 140-amino-acid chain; its full sequence is Lymphocyte antigen 6H (140 aa).

The signal sequence occupies residues 1-25 (MLPAAMKGLGLALLAVLLCSAPAHG). One can recognise a UPAR/Ly6 domain in the interval 26–91 (LWCQDCTLTT…RHFFSDYLMG (66 aa)). Disulfide bonds link Cys-28–Cys-52, Cys-31–Cys-40, Cys-45–Cys-73, Cys-77–Cys-104, and Cys-105–Cys-110. Asn-36 carries an N-linked (GlcNAc...) asparagine glycan. Gly-115 is lipidated: GPI-anchor amidated glycine. Residues 116 to 140 (AGHSPWALAGGLLLSLGPALLWAGP) constitute a propeptide, removed in mature form.

In terms of assembly, interacts with CHRNA4 and CHRNA7. Highly expressed in brain (cerebral cortex, amygdala, hippocampus and subthalamic nucleus) and in acute human leukemic cell line MOLT-3. Also found in lower levels in testis, pancreas, small intestine and colon.

It is found in the cell membrane. In terms of biological role, believed to act as a modulator of nicotinic acetylcholine receptors (nAChRs) activity. In vitro inhibits alpha-3:beta-4-containing nAChRs maximum response. May play a role in the intracellular trafficking of alpha-7-containing nAChRs and may inhibit their expression at the cell surface. Seems to inhibit alpha-7/CHRNA7 signaling in hippocampal neurons. This is Lymphocyte antigen 6H (LY6H) from Homo sapiens (Human).